Reading from the N-terminus, the 843-residue chain is KN motif and ankyrin repeat domain-containing protein 2 (843 aa).

Residues 1 to 31 (MAQVLHVPAPFPGTPGQASPAAFPSKEPDPP) form a disordered region. Residues 1–72 (MAQVLHVPAP…AVQRRPRLGS (72 aa)) are interaction with AIFM1. A phosphoserine mark is found at S19, S83, S86, S89, and S92. At R105 the chain carries Omega-N-methylarginine. Residues 161-182 (LAGVGLLPPTPRSSGLSTPVAP) form a disordered region. T170 is modified (phosphothreonine). 2 coiled-coil regions span residues 183–234 (SAGH…QLKS) and 282–313 (DGEA…TQQV). T331 bears the Phosphothreonine mark. The residue at position 358 (S358) is a Phosphoserine. A disordered region spans residues 410–577 (TERSCTGAPR…VASGPDPEEE (168 aa)). A compositionally biased stretch (low complexity) spans 457-470 (AAASQDSQAADGAG). Residue S532 is modified to Phosphoserine. The span at 547–561 (ATTSLEGPQLSQESQ) shows a compositional bias: polar residues. Residues 606–643 (RELKVAYTTVLQEWLRLACRSDAHPELVRRHLVTFRAM) form an ANK 0; degenerate repeat. An interaction with NCOA1 region spans residues 661–827 (TALHYSVSHA…YSRMNIKCSF (167 aa)). ANK repeat units lie at residues 673–703 (PVVR…TALA), 707–740 (TQDD…LAVS), 745–774 (DVVR…ACEH), 778–808 (EITG…ALDA), and 812–842 (EIAS…SSAE).

Interacts (non-phosphorylated form) with NCOA1; NCOA2 AND NCOA3. Interacts with AIFM1. Interacts with ARHGDIA; the interaction is direct and may regulate the interaction of ARHGDIA with RHOA, RAC1 and CDC42. Interacts (via ANK repeats 1-5) with KIF21A (via residues 1148-1169). Phosphorylated by casein kinase II upon estrogen stimulation. Phosphorylation induces the release by KANK2 of NCOA1 and its translocation to the nucleus where NCOA1 can activate gene transcription. Widely expressed with highest levels in liver and skeletal muscle.

The protein resides in the cytoplasm. The protein localises to the mitochondrion. Involved in transcription regulation by sequestering in the cytoplasm nuclear receptor coactivators such as NCOA1, NCOA2 and NCOA3. Involved in regulation of caspase-independent apoptosis by sequestering the proapoptotic factor AIFM1 in mitochondria. Pro-apoptotic stimuli can induce its proteasomal degradation allowing the translocation of AIFM1 to the nucleus to induce apoptosis. Involved in the negative control of vitamin D receptor signaling pathway. Involved in actin stress fibers formation through its interaction with ARHGDIA and the regulation of the Rho signaling pathway. May thereby play a role in cell adhesion and migration, regulating for instance podocytes migration during development of the kidney. Through the Rho signaling pathway may also regulate cell proliferation. This is KN motif and ankyrin repeat domain-containing protein 2 (Kank2) from Mus musculus (Mouse).